Reading from the N-terminus, the 345-residue chain is Glycerol-3-phosphate dehydrogenase [NAD(P)+] (345 aa).

Ser-23, Tyr-24, His-44, and Lys-118 together coordinate NADPH. Sn-glycerol 3-phosphate-binding residues include Lys-118, Gly-147, and Thr-149. Ala-151 lines the NADPH pocket. Residues Lys-203, Asp-256, Ser-266, Arg-267, and Asn-268 each contribute to the sn-glycerol 3-phosphate site. Residue Lys-203 is the Proton acceptor of the active site. Arg-267 is an NADPH binding site. Positions 291 and 293 each coordinate NADPH.

The protein belongs to the NAD-dependent glycerol-3-phosphate dehydrogenase family.

It localises to the cytoplasm. It catalyses the reaction sn-glycerol 3-phosphate + NAD(+) = dihydroxyacetone phosphate + NADH + H(+). It carries out the reaction sn-glycerol 3-phosphate + NADP(+) = dihydroxyacetone phosphate + NADPH + H(+). The protein operates within membrane lipid metabolism; glycerophospholipid metabolism. Functionally, catalyzes the reduction of the glycolytic intermediate dihydroxyacetone phosphate (DHAP) to sn-glycerol 3-phosphate (G3P), the key precursor for phospholipid synthesis. This Vibrio campbellii (strain ATCC BAA-1116) protein is Glycerol-3-phosphate dehydrogenase [NAD(P)+].